A 61-amino-acid polypeptide reads, in one-letter code: Small ribosomal subunit protein uS14 (61 aa).

Positions 24, 27, 40, and 43 each coordinate Zn(2+).

The protein belongs to the universal ribosomal protein uS14 family. Zinc-binding uS14 subfamily. In terms of assembly, part of the 30S ribosomal subunit. Contacts proteins S3 and S10. It depends on Zn(2+) as a cofactor.

In terms of biological role, binds 16S rRNA, required for the assembly of 30S particles and may also be responsible for determining the conformation of the 16S rRNA at the A site. This Brevibacillus brevis (strain 47 / JCM 6285 / NBRC 100599) protein is Small ribosomal subunit protein uS14.